The following is a 689-amino-acid chain: DNA topoisomerase 1 (689 aa).

The Toprim domain maps to 3 to 113 (DNLVIVESPA…KENRVVFNEI (111 aa)). Residues E9 and D82 each contribute to the Mg(2+) site. The region spanning 129-557 (EMNLVDAQQA…FFSSFKQDVE (429 aa)) is the Topo IA-type catalytic domain. Residues 163-168 (SAGRVQ) form an interaction with DNA region. The active-site O-(5'-phospho-DNA)-tyrosine intermediate is the Y298. A disordered region spans residues 328-357 (SKRKASGKQGDQDAHEAIRPSSTMRTPDDM). C4-type zinc fingers lie at residues 577–603 (CEVCGSPMVIKMGRYGKFMACSNFPDC), 617–645 (CPKCNDGDVVERKSKKNRVFYGCSKYPEC), and 658–681 (CPKCNQYLVENKKGKTTQVICSNC).

This sequence belongs to the type IA topoisomerase family. Monomer. The cofactor is Mg(2+).

The enzyme catalyses ATP-independent breakage of single-stranded DNA, followed by passage and rejoining.. In terms of biological role, releases the supercoiling and torsional tension of DNA, which is introduced during the DNA replication and transcription, by transiently cleaving and rejoining one strand of the DNA duplex. Introduces a single-strand break via transesterification at a target site in duplex DNA. The scissile phosphodiester is attacked by the catalytic tyrosine of the enzyme, resulting in the formation of a DNA-(5'-phosphotyrosyl)-enzyme intermediate and the expulsion of a 3'-OH DNA strand. The free DNA strand then undergoes passage around the unbroken strand, thus removing DNA supercoils. Finally, in the religation step, the DNA 3'-OH attacks the covalent intermediate to expel the active-site tyrosine and restore the DNA phosphodiester backbone. The sequence is that of DNA topoisomerase 1 from Staphylococcus aureus (strain N315).